The following is a 544-amino-acid chain: MKPKQLIFHDAARGKIWRGVEALAEAVKVTLGPRGRTVILERDFGPPQIVNSGVLVAKSIELEDRFENMGAQLLREVAARTSEMAGDGTTTATVLAHGMIQEGLRYLAGGMNPMDLKRGIELAIDTVVAELQRMAKPCASSQEIAHVAAISANNDRSIGDLLASAIDKVGREGAISIEDGSGLVSVLEVVEGMQFDRGFLSPYFINNAERQSAVLEDVSILLCEGRLTSLNDLLPLLEEVVKAGRPLLVIAEDVDSDSLAALVINTMRGTLKTCAVKAPGFGDRRKAMVQDIAVLTGGTVVSDEVGLTLGKVRLQDLGRATRAEITKESTTLIGGAGKPQAIRDRIATIRKERELAASDYDREKLDERAAKLSGGVALIKVGAATETELKERKLRVEDALHATRAAVEEGIVPGGGVALLRARRTLAGLTGGTLDETSGIRLVSRALEEPLRRIVSNAGDEPSVILNRVDESPDPAFGYNAATRAYGDLLQMGVIDPAKVTRLALQNAASIASLILTTDCMIATAPKPSSEEGALNPEGSSPMF.

ATP is bound by residues 30–33 (TLGP), 87–91 (DGTTT), Gly-415, 480–482 (NAA), and Asp-496.

The protein belongs to the chaperonin (HSP60) family. In terms of assembly, forms a cylinder of 14 subunits composed of two heptameric rings stacked back-to-back. Interacts with the co-chaperonin GroES.

It localises to the cytoplasm. It catalyses the reaction ATP + H2O + a folded polypeptide = ADP + phosphate + an unfolded polypeptide.. Together with its co-chaperonin GroES, plays an essential role in assisting protein folding. The GroEL-GroES system forms a nano-cage that allows encapsulation of the non-native substrate proteins and provides a physical environment optimized to promote and accelerate protein folding. This is Chaperonin GroEL 1 from Polaromonas naphthalenivorans (strain CJ2).